The sequence spans 149 residues: Calmodulin (149 aa).

A2 is modified (N-acetylalanine). 4 consecutive EF-hand domains span residues 8–43 (EQIA…LGQN), 44–79 (PTEA…KMKD), 81–116 (DSEE…LGEK), and 117–149 (LTDE…MMAK). 15 residues coordinate Ca(2+): D21, D23, D25, S27, E32, D57, D59, N61, T63, E68, D94, D96, N98, Y100, and D105. Position 116 is an N6,N6,N6-trimethyllysine (K116). 5 residues coordinate Ca(2+): D130, D132, D134, Q136, and E141.

The protein belongs to the calmodulin family.

Its function is as follows. Calmodulin mediates the control of a large number of enzymes, ion channels and other proteins by Ca(2+). Among the enzymes to be stimulated by the calmodulin-Ca(2+) complex are a number of protein kinases and phosphatases. The chain is Calmodulin from Mougeotia scalaris (Green alga).